The sequence spans 347 residues: D-alanine--D-alanine ligase (347 aa).

Residues lysine 131–aspartate 333 enclose the ATP-grasp domain. Position 161–216 (glutamate 161–glutamate 216) interacts with ATP. Mg(2+) is bound by residues aspartate 287, glutamate 300, and asparagine 302.

The protein belongs to the D-alanine--D-alanine ligase family. It depends on Mg(2+) as a cofactor. Requires Mn(2+) as cofactor.

Its subcellular location is the cytoplasm. It carries out the reaction 2 D-alanine + ATP = D-alanyl-D-alanine + ADP + phosphate + H(+). Its pathway is cell wall biogenesis; peptidoglycan biosynthesis. Cell wall formation. The chain is D-alanine--D-alanine ligase from Streptococcus pneumoniae (strain Taiwan19F-14).